Consider the following 460-residue polypeptide: Lipase member I (460 aa).

Positions 1-15 (MRVYIFLCLMCWVRS) are cleaved as a signal peptide. Residue N63 is glycosylated (N-linked (GlcNAc...) asparagine). S159 (nucleophile) is an active-site residue. The Charge relay system role is filled by D183. Residues C238 and C251 are joined by a disulfide bond. H253 acts as the Charge relay system in catalysis. 2 cysteine pairs are disulfide-bonded: C275–C286 and C289–C297. Residue N396 is glycosylated (N-linked (GlcNAc...) asparagine). A disulfide bond links C436 and C455.

It belongs to the AB hydrolase superfamily. Lipase family. As to quaternary structure, interacts with heparin with a high affinity. As to expression, expressed in testis. Expressed exclusively at the connecting piece of the sperm.

Its subcellular location is the cell membrane. The protein localises to the secreted. It catalyses the reaction 1-hexadecanoyl-2-(9Z-octadecenoyl)-sn-glycero-3-phosphate + H2O = 2-(9Z-octadecenoyl)-sn-glycero-3-phosphate + hexadecanoate + H(+). With respect to regulation, inhibited by sodium vanadate. Its function is as follows. Hydrolyzes specifically phosphatidic acid (PA) to produce 2-acyl lysophosphatidic acid (LPA; a potent bioactive lipid mediator) and fatty acid. Does not hydrolyze other phospholipids, like phosphatidylserine (PS), phosphatidylcholine (PC) and phosphatidylethanolamine (PE) or triacylglycerol (TG). The polypeptide is Lipase member I (LIPI) (Homo sapiens (Human)).